The chain runs to 376 residues: Probable ATP-dependent RNA helicase YfmL (376 aa).

Positions 35-205 (AQLIMDGKDV…RELAQEPEVL (171 aa)) constitute a Helicase ATP-binding domain. 48–55 (SPTGTGKT) is an ATP binding site. The short motif at 153–156 (DETD) is the DEAD box element. Residues 231 to 374 (KLLQKLSRLE…EAVYAGGKLK (144 aa)) enclose the Helicase C-terminal domain.

The protein belongs to the DEAD box helicase family.

It catalyses the reaction ATP + H2O = ADP + phosphate + H(+). A probable DEAD-box RNA helicase that plays a role in ribosomal 50S subunit assembly. May be a non-specific RNA helicase. The polypeptide is Probable ATP-dependent RNA helicase YfmL (yfmL) (Bacillus subtilis (strain 168)).